Here is a 1513-residue protein sequence, read N- to C-terminus: Exo-beta-1,6-galactobiohydrolase (1513 aa).

A signal peptide spans 1–31; it reads MRVLSKSLAAMVAAATLVGGGAFAVAGTAYA. The Ricin B-type lectin domain occupies 666–801; that stretch reads VADTTSGDSA…PSANQTWTLR (136 aa). 2 F5/8 type C domains span residues 965 to 1112 and 1116 to 1273; these read AIYV…AFVT and GAAK…VFAQ. Positions 1456–1480 are disordered; that stretch reads VAPGPEEQKPGNTNKPGATGNGNKN. Over residues 1465 to 1480 the composition is skewed to polar residues; it reads PGNTNKPGATGNGNKN. The helical transmembrane segment at 1489-1509 threads the bilayer; the sequence is VAAIAGAVALLAAAAGALFML.

Belongs to the glycosyl hydrolase 30 family.

The protein localises to the cell membrane. The enzyme catalyses Hydrolysis of (1-&gt;6)-beta-D-galactosidic linkages in arabinogalactan proteins and (1-&gt;3):(1-&gt;6)-beta-galactans to yield (1-&gt;6)-beta-galactobiose as the final product.. Its function is as follows. Involved in the type II arabinogalactan (AG) side chains degradation. Specifically releases the non-reducing terminal beta-1,6-galactobiose (beta-1,6-Gal2) from both dearabinosylated larch AG and polymeric beta-1,6-galactan chains by an exo-mode of action. Shows lower activity with larch AG, and very weak activity with dearabinosylated gum arabic, gum arabic and potato galactan. Can probably release beta-1,6-Gal2 from the internal side chains of type II AG. This chain is Exo-beta-1,6-galactobiohydrolase, found in Bifidobacterium longum subsp. longum (strain ATCC 15707 / DSM 20219 / JCM 1217 / NCTC 11818 / E194b).